Reading from the N-terminus, the 211-residue chain is N-(5'-phosphoribosyl)anthranilate isomerase (211 aa).

This sequence belongs to the TrpF family.

It catalyses the reaction N-(5-phospho-beta-D-ribosyl)anthranilate = 1-(2-carboxyphenylamino)-1-deoxy-D-ribulose 5-phosphate. It functions in the pathway amino-acid biosynthesis; L-tryptophan biosynthesis; L-tryptophan from chorismate: step 3/5. The sequence is that of N-(5'-phosphoribosyl)anthranilate isomerase from Pseudomonas paraeruginosa (strain DSM 24068 / PA7) (Pseudomonas aeruginosa (strain PA7)).